The chain runs to 329 residues: 4-hydroxythreonine-4-phosphate dehydrogenase (329 aa).

2 residues coordinate substrate: H136 and T137. The a divalent metal cation site is built by H166, H211, and H266. Residues K274, N283, and R292 each contribute to the substrate site.

Belongs to the PdxA family. As to quaternary structure, homodimer. It depends on Zn(2+) as a cofactor. Requires Mg(2+) as cofactor. Co(2+) serves as cofactor.

Its subcellular location is the cytoplasm. The catalysed reaction is 4-(phosphooxy)-L-threonine + NAD(+) = 3-amino-2-oxopropyl phosphate + CO2 + NADH. Its pathway is cofactor biosynthesis; pyridoxine 5'-phosphate biosynthesis; pyridoxine 5'-phosphate from D-erythrose 4-phosphate: step 4/5. In terms of biological role, catalyzes the NAD(P)-dependent oxidation of 4-(phosphooxy)-L-threonine (HTP) into 2-amino-3-oxo-4-(phosphooxy)butyric acid which spontaneously decarboxylates to form 3-amino-2-oxopropyl phosphate (AHAP). This Pseudomonas syringae pv. tomato (strain ATCC BAA-871 / DC3000) protein is 4-hydroxythreonine-4-phosphate dehydrogenase.